We begin with the raw amino-acid sequence, 370 residues long: Biotin synthase (370 aa).

Residues 79 to 314 form the Radical SAM core domain; that stretch reads CCGNVVDLCS…KQIIRYAGGR (236 aa). Residues Cys97, Cys101, and Cys104 each contribute to the [4Fe-4S] cluster site. [2Fe-2S] cluster-binding residues include Cys142, Cys179, Cys239, and Arg309.

This sequence belongs to the radical SAM superfamily. Biotin synthase family. Homodimer. Requires [4Fe-4S] cluster as cofactor. It depends on [2Fe-2S] cluster as a cofactor.

It catalyses the reaction (4R,5S)-dethiobiotin + (sulfur carrier)-SH + 2 reduced [2Fe-2S]-[ferredoxin] + 2 S-adenosyl-L-methionine = (sulfur carrier)-H + biotin + 2 5'-deoxyadenosine + 2 L-methionine + 2 oxidized [2Fe-2S]-[ferredoxin]. Its pathway is cofactor biosynthesis; biotin biosynthesis; biotin from 7,8-diaminononanoate: step 2/2. Its function is as follows. Catalyzes the conversion of dethiobiotin (DTB) to biotin by the insertion of a sulfur atom into dethiobiotin via a radical-based mechanism. This Trichodesmium erythraeum (strain IMS101) protein is Biotin synthase.